A 359-amino-acid polypeptide reads, in one-letter code: E3 ubiquitin-protein ligase RNF146 (359 aa).

The RING-type zinc-finger motif lies at 37–75; that stretch reads CAICLQTCVHPVSLPCKHVFCYLCVKGASWLGKRCALCR. Glycyl lysine isopeptide (Lys-Gly) (interchain with G-Cter in ubiquitin) cross-links involve residues Lys85 and Lys95. The WWE domain maps to 92-168; sequence EELKAASRGN…EHGRRRKIKR (77 aa). Tyr108, Arg111, and Trp115 together coordinate a glycoprotein. A Glycyl lysine isopeptide (Lys-Gly) (interchain with G-Cter in ubiquitin) cross-link involves residue Lys131. The a glycoprotein site is built by Tyr145, Gln154, Arg164, and Lys176. Lys176 is covalently cross-linked (Glycyl lysine isopeptide (Lys-Gly) (interchain with G-Cter in ubiquitin)). Residues 254-359 are disordered; that stretch reads GDNTAERSHR…PDGQCTVTEV (106 aa). Over residues 284-298 the composition is skewed to acidic residues; the sequence is SIEETESDASSDSED. Residues Ser290 and Ser294 each carry the phosphoserine modification. Positions 306–323 are enriched in polar residues; sequence HSLTQQRLLVSNANQTVP.

As to quaternary structure, can form homooligomers. Interacts with PARsylated AXIN1, AXIN2, BLZF1, CASC3, H1-2, IPO7, LIG3, NCL, PARP1, XRCC1, XRCC5 and XRCC6. Interacts with DDB1, DHX15, IQGAP1, LRPPRC, PARP2, PRKDC, RUVBL2, TNKS1 and TNKS2. Binding often leads to interactor ubiquitination, in the presence of the appropriate E1 and E2 enzymes, and proteasomal degradation. In terms of processing, ubiquitinated; autoubiquitinated. Polyubiquitinated in the presence of UBE2D1, UBE2D2 and UBE2D3. Multimonoubiquitinated in the presence of UBE2E1. Not ubiquitinated in the presence of UBE2H, CDC34, UBE2L3, UBE2L6, nor UBE2C. In the absence of PAR, autoubiquitination occurs on Lys-85, Lys-95 and Lys-176 via 'Lys-11' and 'Lys-48' ubiquitin linkages. In the presence of PAR, Lys-131 and Lys-176 are ubiquitinated via 'Lys-6', 'Lys-33' and 'Lys-48' ubiquitin linkages. Autoubiquitination is enhanced upon PAR-binding. Ubiquitously expressed. Up-regulated in brains from patients with Alzheimer disease.

It localises to the cytoplasm. The protein resides in the cytosol. The protein localises to the nucleus. It catalyses the reaction S-ubiquitinyl-[E2 ubiquitin-conjugating enzyme]-L-cysteine + [acceptor protein]-L-lysine = [E2 ubiquitin-conjugating enzyme]-L-cysteine + N(6)-ubiquitinyl-[acceptor protein]-L-lysine.. The protein operates within protein modification; protein ubiquitination. Functionally, E3 ubiquitin-protein ligase that specifically binds poly-ADP-ribosylated (PARsylated) proteins and mediates their ubiquitination and subsequent degradation. May regulate many important biological processes, such as cell survival and DNA damage response. Acts as an activator of the Wnt signaling pathway by mediating the ubiquitination of PARsylated AXIN1 and AXIN2, 2 key components of the beta-catenin destruction complex. Acts in cooperation with tankyrase proteins (TNKS and TNKS2), which mediate PARsylation of target proteins AXIN1, AXIN2, BLZF1, CASC3, TNKS and TNKS2. Recognizes and binds tankyrase-dependent PARsylated proteins via its WWE domain and mediates their ubiquitination, leading to their degradation. Different ubiquitin linkage types have been observed: TNKS2 undergoes ubiquitination at 'Lys-48' and 'Lys-63', while AXIN1 is only ubiquitinated at 'Lys-48'. May regulate TNKS and TNKS2 subcellular location, preventing aggregation at a centrosomal location. Neuroprotective protein. Protects the brain against N-methyl-D-aspartate (NMDA) receptor-mediated glutamate excitotoxicity and ischemia, by interfering with PAR-induced cell death, called parthanatos. Prevents nuclear translocation of AIFM1 in a PAR-binding dependent manner. Does not affect PARP1 activation. Protects against cell death induced by DNA damaging agents, such as N-methyl-N-nitro-N-nitrosoguanidine (MNNG) and rescues cells from G1 arrest. Promotes cell survival after gamma-irradiation. Facilitates DNA repair. In Homo sapiens (Human), this protein is E3 ubiquitin-protein ligase RNF146 (RNF146).